Reading from the N-terminus, the 269-residue chain is Probable aquaporin TIP5-1 (269 aa).

Transmembrane regions (helical) follow at residues 19–39, 54–74, 84–104, 139–159, and 177–197; these read AYFAEFFSTFLFVFIAVGSTI, SLMATAVAQAFGLFAAVFIAA, AVTFAYAIGGHITVPSAIFYW, FGAGILEGVLTFMVVYTVHVA, and ALGALVVGAVTGACVLAAGSL. An NPA 1 motif is present at residues 82–84; the sequence is NPA. Residues 203-205 carry the NPA 2 motif; it reads NPA. The helical transmembrane segment at 223 to 243 threads the bilayer; it reads YWAGPMVGAAVAALVHQALVF.

This sequence belongs to the MIP/aquaporin (TC 1.A.8) family. TIP (TC 1.A.8.10) subfamily. In terms of tissue distribution, expressed in leaves and anthers, and at lower levels in roots.

It is found in the vacuole membrane. Aquaporins facilitate the transport of water and small neutral solutes across cell membranes. May be involved in transport from the vacuolar compartment to the cytoplasm. The polypeptide is Probable aquaporin TIP5-1 (TIP5;1) (Oryza sativa subsp. japonica (Rice)).